Reading from the N-terminus, the 196-residue chain is Holliday junction resolvase RecU (196 aa).

Positions 82, 84, 97, and 116 each coordinate Mg(2+).

Belongs to the RecU family. Mg(2+) is required as a cofactor.

Its subcellular location is the cytoplasm. The enzyme catalyses Endonucleolytic cleavage at a junction such as a reciprocal single-stranded crossover between two homologous DNA duplexes (Holliday junction).. Endonuclease that resolves Holliday junction intermediates in genetic recombination. Cleaves mobile four-strand junctions by introducing symmetrical nicks in paired strands. Promotes annealing of linear ssDNA with homologous dsDNA. Required for DNA repair, homologous recombination and chromosome segregation. This chain is Holliday junction resolvase RecU, found in Oceanobacillus iheyensis (strain DSM 14371 / CIP 107618 / JCM 11309 / KCTC 3954 / HTE831).